The chain runs to 354 residues: D-alanine--D-alanine ligase (354 aa).

The 206-residue stretch at 133–338 (KHLFAQAGLP…YSDLIEQLVE (206 aa)) folds into the ATP-grasp domain. Position 166-221 (166-221 (EKELGYPCFVKPANLGSSVGISKCRNREELEKAFELAFEYDRKIVVEEGIAGREIE)) interacts with ATP. The Mg(2+) site is built by Asp292, Glu305, and Asn307.

This sequence belongs to the D-alanine--D-alanine ligase family. Requires Mg(2+) as cofactor. It depends on Mn(2+) as a cofactor.

The protein localises to the cytoplasm. It carries out the reaction 2 D-alanine + ATP = D-alanyl-D-alanine + ADP + phosphate + H(+). Its pathway is cell wall biogenesis; peptidoglycan biosynthesis. Its function is as follows. Cell wall formation. The protein is D-alanine--D-alanine ligase of Bacillus velezensis (strain DSM 23117 / BGSC 10A6 / LMG 26770 / FZB42) (Bacillus amyloliquefaciens subsp. plantarum).